Here is a 129-residue protein sequence, read N- to C-terminus: MLELALGVPSLLSASTLSRPALASSFSNASTLLSFVFFFFFFKDSSPKASAMSSVGSFSASASAETLLDFFFFFFNPANKSSPEPFSLPFTAASKSSGITFLVFFFFFSAGSNPNSAAKSEDISCVLII.

The next 3 helical transmembrane spans lie at 22–42 (LASS…FFFF), 55–75 (VGSF…FFFF), and 88–108 (LPFT…FFFF).

Its subcellular location is the membrane. This is an uncharacterized protein from Saccharomyces cerevisiae (strain ATCC 204508 / S288c) (Baker's yeast).